The primary structure comprises 420 residues: MAEVKVPELAESITEGTIAEWLKNVGDNVDKGEAILELETDKVNVEVVSEEAGVLSEQLAEEGDTVEVGQAVAVVGEGQVNTSNDSSNESSQKDEAKEKETPKQSNPNSSESENTQDNSQQRINATPSARRHARKNGVDLSEVSGKGNDVLRKDDVENSQKSSSQTAKSESKSQNSGSKQSNNNPSKPVIREKMSRRKKTAAKKLLEVSNQTAMLTTFNEVDMTNVMDLRKRKKEQFIKDHDGTKLGFMSFFTKAAVAALKKYPEVNAEIDGDDMITKQFYDIGIAVSTDDGLLVPFVRDCDKKNFAEIEQEIANLAVKARDKKLGLDDMVNGSFTITNGGIFGSMMSTPIINGNQAAILGMHSIITRPIAVDKDTIENRPMMYIALSYDHRIIDGKEAVGFLKTIKELIENPEDLLLES.

Positions 1-76 constitute a Lipoyl-binding domain; that stretch reads MAEVKVPELA…EVGQAVAVVG (76 aa). N6-lipoyllysine is present on K42. Positions 75 to 201 are disordered; it reads VGEGQVNTSN…EKMSRRKKTA (127 aa). Polar residues predominate over residues 81–90; the sequence is NTSNDSSNES. Positions 91–102 are enriched in basic and acidic residues; it reads SQKDEAKEKETP. Residues 103–127 show a composition bias toward polar residues; the sequence is KQSNPNSSESENTQDNSQQRINATP. The region spanning 124-160 is the Peripheral subunit-binding (PSBD) domain; it reads NATPSARRHARKNGVDLSEVSGKGNDVLRKDDVENSQ. Positions 149 to 158 are enriched in basic and acidic residues; sequence DVLRKDDVEN. The segment covering 159 to 188 has biased composition (low complexity); sequence SQKSSSQTAKSESKSQNSGSKQSNNNPSKP. Catalysis depends on residues H391 and D395.

Belongs to the 2-oxoacid dehydrogenase family. Forms a 24-polypeptide structural core with octahedral symmetry. Part of the 2-oxoglutarate dehydrogenase (OGDH) complex composed of E1 (2-oxoglutarate dehydrogenase), E2 (dihydrolipoamide succinyltransferase) and E3 (dihydrolipoamide dehydrogenase); the complex contains multiple copies of the three enzymatic components (E1, E2 and E3). The cofactor is (R)-lipoate.

The catalysed reaction is N(6)-[(R)-dihydrolipoyl]-L-lysyl-[protein] + succinyl-CoA = N(6)-[(R)-S(8)-succinyldihydrolipoyl]-L-lysyl-[protein] + CoA. The protein operates within amino-acid degradation; L-lysine degradation via saccharopine pathway; glutaryl-CoA from L-lysine: step 6/6. Functionally, E2 component of the 2-oxoglutarate dehydrogenase (OGDH) complex which catalyzes the second step in the conversion of 2-oxoglutarate to succinyl-CoA and CO(2). The protein is Dihydrolipoyllysine-residue succinyltransferase component of 2-oxoglutarate dehydrogenase complex (odhB) of Staphylococcus epidermidis (strain ATCC 12228 / FDA PCI 1200).